Consider the following 707-residue polypeptide: Polyribonucleotide nucleotidyltransferase (707 aa).

Positions 485 and 491 each coordinate Mg(2+). In terms of domain architecture, KH spans 552 to 615 (PRITVINIPK…AAIKWIKGIV (64 aa)). In terms of domain architecture, S1 motif spans 621-689 (GEIYEGKVVK…DRGKVKLSMK (69 aa)).

It belongs to the polyribonucleotide nucleotidyltransferase family. It depends on Mg(2+) as a cofactor.

It is found in the cytoplasm. The catalysed reaction is RNA(n+1) + phosphate = RNA(n) + a ribonucleoside 5'-diphosphate. In terms of biological role, involved in mRNA degradation. Catalyzes the phosphorolysis of single-stranded polyribonucleotides processively in the 3'- to 5'-direction. The protein is Polyribonucleotide nucleotidyltransferase of Rhodospirillum centenum (strain ATCC 51521 / SW).